The chain runs to 79 residues: Acyl carrier protein (79 aa).

Residues 2–77 enclose the Carrier domain; that stretch reads SDIEARVKKI…LAIDYAKSHA (76 aa). S37 is modified (O-(pantetheine 4'-phosphoryl)serine).

Belongs to the acyl carrier protein (ACP) family. In terms of processing, 4'-phosphopantetheine is transferred from CoA to a specific serine of apo-ACP by AcpS. This modification is essential for activity because fatty acids are bound in thioester linkage to the sulfhydryl of the prosthetic group.

The protein localises to the cytoplasm. Its pathway is lipid metabolism; fatty acid biosynthesis. Functionally, carrier of the growing fatty acid chain in fatty acid biosynthesis. This Methylibium petroleiphilum (strain ATCC BAA-1232 / LMG 22953 / PM1) protein is Acyl carrier protein.